A 506-amino-acid chain; its full sequence is Glutamate--tRNA ligase (506 aa).

The short motif at 24-34 (PSPTGLQHIGG) is the 'HIGH' region element. Zn(2+) contacts are provided by Cys121, Cys123, Cys148, and His150. A 'KMSKS' region motif is present at residues 266-270 (KLSKR). Residue Lys269 coordinates ATP.

It belongs to the class-I aminoacyl-tRNA synthetase family. Glutamate--tRNA ligase type 1 subfamily. As to quaternary structure, monomer. It depends on Zn(2+) as a cofactor.

The protein resides in the cytoplasm. It carries out the reaction tRNA(Glu) + L-glutamate + ATP = L-glutamyl-tRNA(Glu) + AMP + diphosphate. In terms of biological role, catalyzes the attachment of glutamate to tRNA(Glu) in a two-step reaction: glutamate is first activated by ATP to form Glu-AMP and then transferred to the acceptor end of tRNA(Glu). This is Glutamate--tRNA ligase from Borrelia recurrentis (strain A1).